Consider the following 153-residue polypeptide: Peptide deformylase (153 aa).

Cys87 and His129 together coordinate Fe cation. Glu130 is a catalytic residue. His133 is a binding site for Fe cation.

It belongs to the polypeptide deformylase family. Fe(2+) serves as cofactor.

The enzyme catalyses N-terminal N-formyl-L-methionyl-[peptide] + H2O = N-terminal L-methionyl-[peptide] + formate. Removes the formyl group from the N-terminal Met of newly synthesized proteins. Requires at least a dipeptide for an efficient rate of reaction. N-terminal L-methionine is a prerequisite for activity but the enzyme has broad specificity at other positions. The protein is Peptide deformylase of Dictyoglomus thermophilum (strain ATCC 35947 / DSM 3960 / H-6-12).